We begin with the raw amino-acid sequence, 249 residues long: 5'-nucleotidase SurE (249 aa).

A divalent metal cation contacts are provided by Asp9, Asp10, Ser40, and Asn92.

This sequence belongs to the SurE nucleotidase family. A divalent metal cation serves as cofactor.

It is found in the cytoplasm. It catalyses the reaction a ribonucleoside 5'-phosphate + H2O = a ribonucleoside + phosphate. Functionally, nucleotidase that shows phosphatase activity on nucleoside 5'-monophosphates. In Shewanella oneidensis (strain ATCC 700550 / JCM 31522 / CIP 106686 / LMG 19005 / NCIMB 14063 / MR-1), this protein is 5'-nucleotidase SurE.